We begin with the raw amino-acid sequence, 507 residues long: Histidine ammonia-lyase (507 aa).

Positions 141–143 form a cross-link, 5-imidazolinone (Ala-Gly); it reads ASG. At S142 the chain carries 2,3-didehydroalanine (Ser).

The protein belongs to the PAL/histidase family. Post-translationally, contains an active site 4-methylidene-imidazol-5-one (MIO), which is formed autocatalytically by cyclization and dehydration of residues Ala-Ser-Gly.

The protein localises to the cytoplasm. The enzyme catalyses L-histidine = trans-urocanate + NH4(+). It participates in amino-acid degradation; L-histidine degradation into L-glutamate; N-formimidoyl-L-glutamate from L-histidine: step 1/3. This Cereibacter sphaeroides (strain KD131 / KCTC 12085) (Rhodobacter sphaeroides) protein is Histidine ammonia-lyase.